The sequence spans 337 residues: GTPase Obg (337 aa).

The Obg domain maps to 4 to 162 (SNFIDYVKVC…AWVILELKVL (159 aa)). One can recognise an OBG-type G domain in the interval 163-329 (ADVGLVGFPN…LKDLLWTTMN (167 aa)). GTP contacts are provided by residues 169 to 176 (GFPNAGKS), 194 to 198 (FTTLA), 216 to 219 (DIPG), 283 to 286 (SKSD), and 310 to 312 (SSY). Residues S176 and T196 each contribute to the Mg(2+) site.

It belongs to the TRAFAC class OBG-HflX-like GTPase superfamily. OBG GTPase family. As to quaternary structure, monomer. The cofactor is Mg(2+).

Its subcellular location is the cytoplasm. In terms of biological role, an essential GTPase which binds GTP, GDP and possibly (p)ppGpp with moderate affinity, with high nucleotide exchange rates and a fairly low GTP hydrolysis rate. Plays a role in control of the cell cycle, stress response, ribosome biogenesis and in those bacteria that undergo differentiation, in morphogenesis control. This is GTPase Obg from Cytophaga hutchinsonii (strain ATCC 33406 / DSM 1761 / CIP 103989 / NBRC 15051 / NCIMB 9469 / D465).